The sequence spans 37 residues: Cytochrome b6-f complex subunit 5 (37 aa).

A helical transmembrane segment spans residues 5 to 25; sequence LLSGIVLGLIVVTLAGLFYAA.

Belongs to the PetG family. As to quaternary structure, the 4 large subunits of the cytochrome b6-f complex are cytochrome b6, subunit IV (17 kDa polypeptide, PetD), cytochrome f and the Rieske protein, while the 4 small subunits are PetG, PetL, PetM and PetN. The complex functions as a dimer.

The protein localises to the cellular thylakoid membrane. Functionally, component of the cytochrome b6-f complex, which mediates electron transfer between photosystem II (PSII) and photosystem I (PSI), cyclic electron flow around PSI, and state transitions. PetG is required for either the stability or assembly of the cytochrome b6-f complex. This chain is Cytochrome b6-f complex subunit 5, found in Anabaena variabilis.